Here is a 226-residue protein sequence, read N- to C-terminus: ATP synthase F(0) complex subunit a (226 aa).

Transmembrane regions (helical) follow at residues Phe-6 to Phe-26, Trp-68 to Leu-88, Gln-97 to Phe-117, Ile-138 to Val-158, Ile-164 to Ile-184, and Ala-189 to Ile-209.

The protein belongs to the ATPase A chain family. As to quaternary structure, component of the ATP synthase complex composed at least of ATP5F1A/subunit alpha, ATP5F1B/subunit beta, ATP5MC1/subunit c (homooctomer), MT-ATP6/subunit a, MT-ATP8/subunit 8, ATP5ME/subunit e, ATP5MF/subunit f, ATP5MG/subunit g, ATP5MK/subunit k, ATP5MJ/subunit j, ATP5F1C/subunit gamma, ATP5F1D/subunit delta, ATP5F1E/subunit epsilon, ATP5PF/subunit F6, ATP5PB/subunit b, ATP5PD/subunit d, ATP5PO/subunit OSCP. ATP synthase complex consists of a soluble F(1) head domain (subunits alpha(3) and beta(3)) - the catalytic core - and a membrane F(0) domain - the membrane proton channel (subunits c, a, 8, e, f, g, k and j). These two domains are linked by a central stalk (subunits gamma, delta, and epsilon) rotating inside the F1 region and a stationary peripheral stalk (subunits F6, b, d, and OSCP). Interacts with DNAJC30; interaction is direct.

The protein localises to the mitochondrion inner membrane. It catalyses the reaction H(+)(in) = H(+)(out). Its function is as follows. Subunit a, of the mitochondrial membrane ATP synthase complex (F(1)F(0) ATP synthase or Complex V) that produces ATP from ADP in the presence of a proton gradient across the membrane which is generated by electron transport complexes of the respiratory chain. ATP synthase complex consist of a soluble F(1) head domain - the catalytic core - and a membrane F(1) domain - the membrane proton channel. These two domains are linked by a central stalk rotating inside the F(1) region and a stationary peripheral stalk. During catalysis, ATP synthesis in the catalytic domain of F(1) is coupled via a rotary mechanism of the central stalk subunits to proton translocation. With the subunit c (ATP5MC1), forms the proton-conducting channel in the F(0) domain, that contains two crucial half-channels (inlet and outlet) that facilitate proton movement from the mitochondrial intermembrane space (IMS) into the matrix. Protons are taken up via the inlet half-channel and released through the outlet half-channel, following a Grotthuss mechanism. This Mus musculus (Mouse) protein is ATP synthase F(0) complex subunit a.